The sequence spans 149 residues: Large ribosomal subunit protein uL15 (149 aa).

Residues methionine 1–glycine 53 are disordered. Residues threonine 23 to histidine 35 show a composition bias toward gly residues. The span at lysine 36–lysine 47 shows a compositional bias: basic residues.

The protein belongs to the universal ribosomal protein uL15 family. In terms of assembly, part of the 50S ribosomal subunit.

Binds to the 23S rRNA. The protein is Large ribosomal subunit protein uL15 of Coprothermobacter proteolyticus (strain ATCC 35245 / DSM 5265 / OCM 4 / BT).